The chain runs to 219 residues: Adenylate kinase (219 aa).

10 to 15 (GAGKGT) is a binding site for ATP. The segment at 30-59 (STGDMLRAAVKAETPVGLEAKKVMDAGQLV) is NMP. AMP is bound by residues Thr31, Arg36, 57 to 59 (QLV), 85 to 88 (GFPR), and Gln92. Residues 122–159 (GRRVHLSSGRTYHVLFNPPKQEGLDDETGEPLVQRADD) are LID. Residues Arg123 and 132-133 (TY) each bind ATP. The AMP site is built by Arg156 and Arg167. Gly203 lines the ATP pocket.

It belongs to the adenylate kinase family. As to quaternary structure, monomer.

The protein resides in the cytoplasm. The catalysed reaction is AMP + ATP = 2 ADP. The protein operates within purine metabolism; AMP biosynthesis via salvage pathway; AMP from ADP: step 1/1. In terms of biological role, catalyzes the reversible transfer of the terminal phosphate group between ATP and AMP. Plays an important role in cellular energy homeostasis and in adenine nucleotide metabolism. The polypeptide is Adenylate kinase (Chlorobium limicola (strain DSM 245 / NBRC 103803 / 6330)).